Reading from the N-terminus, the 45-residue chain is Pseudo-hevein (45 aa).

In terms of domain architecture, Chitin-binding type-1 spans 1 to 43 (EQCGRQAGGKLCPNNLCCSQYGWCGSSDDYCSPSKNCQSNCKG). Intrachain disulfides connect C3/C18, C12/C24, C17/C31, and C37/C41.

In terms of biological role, N-acetyl-D-glucosamine / N-acetyl-D-neuraminic acid binding lectin. Can inhibit fungal growth. The polypeptide is Pseudo-hevein (Hevea brasiliensis (Para rubber tree)).